The chain runs to 180 residues: Centromere protein M (180 aa).

It localises to the nucleus. It is found in the chromosome. The protein resides in the centromere. Probable component of a centromeric complex involved in assembly of kinetochore proteins, mitotic progression and chromosome segregation. The sequence is that of Centromere protein M (cenpm) from Xenopus laevis (African clawed frog).